The chain runs to 350 residues: Isopentenyl-diphosphate delta-isomerase (350 aa).

15–16 provides a ligand contact to substrate; the sequence is RK. FMN is bound by residues Ser73, 74-76, Ser104, and Asn132; that span reads SMT. 104-106 is a binding site for substrate; the sequence is SQR. Gln167 contacts substrate. Glu168 is a binding site for Mg(2+). FMN is bound by residues Lys199, Thr229, 279 to 281, and 300 to 301; these read GLR and AM.

Belongs to the IPP isomerase type 2 family. In terms of assembly, homooctamer. Dimer of tetramers. Requires FMN as cofactor. NADPH serves as cofactor. It depends on Mg(2+) as a cofactor.

Its subcellular location is the cytoplasm. It catalyses the reaction isopentenyl diphosphate = dimethylallyl diphosphate. Its function is as follows. Involved in the biosynthesis of isoprenoids. Catalyzes the 1,3-allylic rearrangement of the homoallylic substrate isopentenyl (IPP) to its allylic isomer, dimethylallyl diphosphate (DMAPP). In Nostoc sp. (strain PCC 7120 / SAG 25.82 / UTEX 2576), this protein is Isopentenyl-diphosphate delta-isomerase.